A 492-amino-acid chain; its full sequence is Trigger factor (492 aa).

The PPIase FKBP-type domain occupies 164-249 (GDLVVVDFVG…VSDVRVPRKA (86 aa)). The disordered stretch occupies residues 440–492 (EAEEDSIGKHDHDHDHKEKASDKPKAKKAAAPKKKAAPKKKAAPKAEKKSSDE). The segment covering 445-463 (SIGKHDHDHDHKEKASDKP) has biased composition (basic and acidic residues). Residues 464-482 (KAKKAAAPKKKAAPKKKAA) are compositionally biased toward basic residues. Over residues 483-492 (PKAEKKSSDE) the composition is skewed to basic and acidic residues.

It belongs to the FKBP-type PPIase family. Tig subfamily.

Its subcellular location is the cytoplasm. The catalysed reaction is [protein]-peptidylproline (omega=180) = [protein]-peptidylproline (omega=0). Its function is as follows. Involved in protein export. Acts as a chaperone by maintaining the newly synthesized protein in an open conformation. Functions as a peptidyl-prolyl cis-trans isomerase. The chain is Trigger factor from Zymomonas mobilis subsp. mobilis (strain ATCC 31821 / ZM4 / CP4).